Here is a 721-residue protein sequence, read N- to C-terminus: Sodium/hydrogen exchanger 6 (721 aa).

The segment at 1–44 (MTSPKPWARSAGSCQTQRAVRTRKKECREEGESDTEKGPAASSA) is disordered. Residues 26–37 (ECREEGESDTEK) are compositionally biased toward basic and acidic residues. The next 12 membrane-spanning stretches (helical) occupy residues 91–111 (SANL…IWLF), 123–143 (GLAM…IHVP), 196–216 (VTFD…FYAG), 231–251 (ILAY…SIMY), 272–292 (CLLF…AIFH), 298–318 (VELY…AIVL), 344–364 (IGIF…TGVV), 388–412 (MSWS…FCGI), 434–454 (FELL…LTLF), 456–476 (FQNH…IFLG), 499–519 (NFQH…ALAI), and 535–555 (LLIV…MLSC).

The protein belongs to the monovalent cation:proton antiporter 1 (CPA1) transporter (TC 2.A.36) family. In terms of assembly, homodimer. Interacts with RACK1; regulates the distribution of SLC9A6 between endosomes and the plasma membrane. Post-translationally, ubiquitinated (in vitro). Glycosylated.

Its subcellular location is the endosome membrane. It is found in the recycling endosome membrane. The protein resides in the early endosome membrane. The protein localises to the late endosome membrane. It localises to the cell membrane. The enzyme catalyses Na(+)(in) + H(+)(out) = Na(+)(out) + H(+)(in). The catalysed reaction is K(+)(in) + H(+)(out) = K(+)(out) + H(+)(in). Endosomal Na(+), K(+)/H(+) antiporter. Mediates the electroneutral exchange of endosomal luminal H(+) for a cytosolic Na(+) or K(+). By facilitating proton efflux, SLC9A6 counteracts the acidity generated by vacuolar (V)-ATPase, thereby limiting luminal acidification. Responsible for alkalizing and maintaining the endosomal pH, and consequently in, e.g., endosome maturation and trafficking of recycling endosomal cargo. Plays a critical role during neurodevelopment by regulating synaptic development and plasticity. Implicated in the maintenance of cell polarity in a manner that is dependent on its ability to modulate intravesicular pH. Regulates intracelular pH in some specialized cells, osteoclasts and stereocilia where this transporter localizes to the plasma membrane. The sequence is that of Sodium/hydrogen exchanger 6 from Rattus norvegicus (Rat).